Consider the following 489-residue polypeptide: GTPase Der (489 aa).

2 consecutive EngA-type G domains span residues 30–199 (PVVS…KDKP) and 227–403 (FRLA…SRSH). GTP is bound by residues 36–43 (GRQNVGKS), 85–89 (DTPGL), 151–154 (NKAD), 233–240 (GKPNSGKS), 280–284 (DTAGI), and 345–348 (NKWD). Residues 404–488 (RKVSTSELNK…PIRLEFRSDR (85 aa)) enclose the KH-like domain.

It belongs to the TRAFAC class TrmE-Era-EngA-EngB-Septin-like GTPase superfamily. EngA (Der) GTPase family. In terms of assembly, associates with the 50S ribosomal subunit.

GTPase that plays an essential role in the late steps of ribosome biogenesis. The chain is GTPase Der from Leptospira interrogans serogroup Icterohaemorrhagiae serovar copenhageni (strain Fiocruz L1-130).